A 562-amino-acid polypeptide reads, in one-letter code: Phosphopantothenoylcysteine decarboxylase subunit SIS2 (562 aa).

Over residues 1-10 (MTAVASTSGK) the composition is skewed to polar residues. Disordered regions lie at residues 1-63 (MTAV…SNAT), 97-165 (FSDL…KDYD), and 490-562 (GYPK…DKHQ). The segment covering 27-42 (GQKEILLDHEDAKGKD) has biased composition (basic and acidic residues). Polar residues-rich tracts occupy residues 44–63 (IINS…SNAT) and 99–113 (DLKQ…TQLK). 4 positions are modified to phosphoserine: Ser-47, Ser-50, Ser-54, and Ser-56. Over residues 121-134 (SPNSNPAPVSNSIP) the composition is skewed to low complexity. Residues 142–156 (NHTNTSRTTQLSGSP) show a composition bias toward polar residues. A Phosphoserine modification is found at Ser-155. The span at 496 to 553 (EEEDDDEDEEEDDDEEEDTEDKNENNNDDDDDDDDDDDDDDDDDDDDDDDDEDEDEAE) shows a compositional bias: acidic residues.

Belongs to the HFCD (homooligomeric flavin containing Cys decarboxylase) superfamily. As to quaternary structure, interacts with the C-terminal domain of PPZ1. Component of the phosphopantothenoylcysteine decarboxylase (PPCDC) complex, a heterotrimer composed of CAB3, SIS2 and VHS3.

It localises to the nucleus. The protein resides in the cytoplasm. Component of the phosphopantothenoylcysteine decarboxylase (PPCDC) involved in the coenzyme A synthesis. Acts as an inhibitory subunit of protein phosphatase PPZ1, which is involved in many cellular processes such as G1-S transition or salt tolerance. Also modulates the expression of the ENA1 ATPase. The sequence is that of Phosphopantothenoylcysteine decarboxylase subunit SIS2 (SIS2) from Saccharomyces cerevisiae (strain ATCC 204508 / S288c) (Baker's yeast).